The sequence spans 314 residues: Hydroxyethylthiazole kinase (314 aa).

Residue methionine 70 coordinates substrate. The ATP site is built by arginine 145 and serine 217. Glycine 244 serves as a coordination point for substrate.

The protein belongs to the Thz kinase family. Mg(2+) is required as a cofactor.

It carries out the reaction 5-(2-hydroxyethyl)-4-methylthiazole + ATP = 4-methyl-5-(2-phosphooxyethyl)-thiazole + ADP + H(+). It participates in cofactor biosynthesis; thiamine diphosphate biosynthesis; 4-methyl-5-(2-phosphoethyl)-thiazole from 5-(2-hydroxyethyl)-4-methylthiazole: step 1/1. Catalyzes the phosphorylation of the hydroxyl group of 4-methyl-5-beta-hydroxyethylthiazole (THZ). The sequence is that of Hydroxyethylthiazole kinase from Bifidobacterium longum (strain DJO10A).